The following is a 462-amino-acid chain: Nitrate/nitrite transporter NarU (462 aa).

Over 1–35 (MTRQNENYNRYLLSDWRPENPAFWENKGKGIARRN) the chain is Cytoplasmic. The chain crosses the membrane as a helical span at residues 36–56 (LWISVSCLLLAFCVWMLFSAV). Over 57 to 71 (AVNLNKIGFNFTTDQ) the chain is Periplasmic. A helical membrane pass occupies residues 72–92 (LFLLTALPSLSGAILRVPYSF). Residues 93–101 (MVPLFGGRK) lie on the Cytoplasmic side of the membrane. A helical transmembrane segment spans residues 102–122 (WTVLSTVILIIPCAWLGFAVQ). Topologically, residues 123-124 (NP) are periplasmic. Residues 125 to 145 (ATPFGVFMLIALLCGFAGANF) form a helical membrane-spanning segment. The Cytoplasmic segment spans residues 146 to 180 (ASSMGNISFFFPKARQGSALGINGGLGNLGVSVMQ). Residues 181-201 (LIAPLVIFLPIFTFLGVQGVP) form a helical membrane-spanning segment. The Periplasmic portion of the chain corresponds to 202-206 (QPDGS). Residues 207 to 227 (LLALTNAAWIWVPLLAVATLA) form a helical membrane-spanning segment. The Cytoplasmic segment spans residues 228 to 258 (AWFGMNDIGSSKASVASQLPVLKRLHLWLLS). A helical membrane pass occupies residues 259 to 279 (LLYLATFGSFIGFSAGFAMLA). Residues 280–287 (KTQFPDVN) lie on the Periplasmic side of the membrane. The helical transmembrane segment at 288-308 (ILQLAFFGPFIGALARSAGGV) threads the bilayer. Residues 309–317 (ISDKFGGVR) lie on the Cytoplasmic side of the membrane. A helical membrane pass occupies residues 318–338 (VTLINFIFMALFTALLFLTLP). At 339–341 (GSG) the chain is on the periplasmic side. Residues 342–362 (AGSFSAFYLVFMGLFLTAGLG) traverse the membrane as a helical segment. At 363-401 (SGSTFQMIAVIFRQITLYNVKLRGGSDEQAQREAVTDTA) the chain is on the cytoplasmic side. Residues 402–422 (AALGFISAIGAVGGFFIPKAF) traverse the membrane as a helical segment. Topologically, residues 423–432 (GTSLALTGSP) are periplasmic. Residues 433 to 453 (VGAMKIFLLFYLACVLLTWLV) form a helical membrane-spanning segment. Over 454–462 (YGRRKPKQQ) the chain is Cytoplasmic.

It belongs to the major facilitator superfamily. Nitrate/nitrite porter (TC 2.A.1.8) family.

It is found in the cell inner membrane. Functionally, catalyzes nitrate uptake, nitrite uptake and nitrite export across the cytoplasmic membrane. The protein is Nitrate/nitrite transporter NarU (narU) of Salmonella typhimurium (strain LT2 / SGSC1412 / ATCC 700720).